The chain runs to 199 residues: MASTENPDPETGKSEPIPASATPPPSSAASFLDCRKIDIITRVLLFSATLTALIVMVTSDQTEMTQLPGVSSPAPVSAEFNDSPAFIYFVVALVVASFYALISTLVSISLLLKPEFTAQFSIYLASLDMVMLGILASATGTAGGVAYIALKGNEEVGWNKICNVYDKFCRYIATSLALSLFASLLLLVLSIWSALSKRT.

Positions Met1–Ser27 are disordered. Ala2 carries the post-translational modification N-acetylalanine. Topologically, residues Ala2–Lys36 are cytoplasmic. The helical transmembrane segment at Ile37–Val57 threads the bilayer. The Extracellular portion of the chain corresponds to Thr58–Ala85. The chain crosses the membrane as a helical span at residues Phe86–Val106. The Cytoplasmic portion of the chain corresponds to Ser107 to Met129. Residues Val130 to Leu150 form a helical membrane-spanning segment. At Lys151 to Tyr171 the chain is on the extracellular side. A helical transmembrane segment spans residues Ile172–Trp192. At Ser193–Thr199 the chain is on the cytoplasmic side.

The protein belongs to the Casparian strip membrane proteins (CASP) family. As to quaternary structure, homodimer and heterodimers. As to expression, expressed in the root endodermis and flowers.

It localises to the cell membrane. The chain is CASP-like protein 1D2 from Arabidopsis thaliana (Mouse-ear cress).